The chain runs to 150 residues: SsrA-binding protein (150 aa).

Belongs to the SmpB family.

It localises to the cytoplasm. Its function is as follows. Required for rescue of stalled ribosomes mediated by trans-translation. Binds to transfer-messenger RNA (tmRNA), required for stable association of tmRNA with ribosomes. tmRNA and SmpB together mimic tRNA shape, replacing the anticodon stem-loop with SmpB. tmRNA is encoded by the ssrA gene; the 2 termini fold to resemble tRNA(Ala) and it encodes a 'tag peptide', a short internal open reading frame. During trans-translation Ala-aminoacylated tmRNA acts like a tRNA, entering the A-site of stalled ribosomes, displacing the stalled mRNA. The ribosome then switches to translate the ORF on the tmRNA; the nascent peptide is terminated with the 'tag peptide' encoded by the tmRNA and targeted for degradation. The ribosome is freed to recommence translation, which seems to be the essential function of trans-translation. This Polynucleobacter asymbioticus (strain DSM 18221 / CIP 109841 / QLW-P1DMWA-1) (Polynucleobacter necessarius subsp. asymbioticus) protein is SsrA-binding protein.